The primary structure comprises 363 residues: MKIVERLQVVLGERSYPISIGAGIIQEDDIFWPLKPGDQAMLVTNKTLANLLKDKVFYHLRKSGIKIDQVILSDGEQYKTLNEMELIISALLEKKHARDTTLIALGGGVIGDLAGFAASVYQRGVRFIQIPTTLLSQVDASVGGKTAVNHLLGKNMIGSFWQPSSVIIDIDCLKTLPYNELVSGMAEVIKYAIVFDKTFFCWLEENIESILSLNHTAMSYCIKKCCELKSQLIALDERENNLRALLNLGHTYGHAIEVHAGYGNWLHGEAISVGMVMAARTSELLGHLKTIDFKRILVLLKRTGLPIKGPKNMSAASYLPYMMRDKKVISGEMRLVLPLSIGKAEIYSNIDKNIILTAIKHSQ.

NAD(+) contacts are provided by residues 74–79, 108–112, 132–133, Lys-145, Lys-154, and 172–175; these read DGEQYK, GVIGD, TT, and CLKT. Residues Glu-187, His-250, and His-267 each contribute to the Zn(2+) site.

This sequence belongs to the sugar phosphate cyclases superfamily. Dehydroquinate synthase family. The cofactor is NAD(+). It depends on Co(2+) as a cofactor. Requires Zn(2+) as cofactor.

The protein resides in the cytoplasm. The catalysed reaction is 7-phospho-2-dehydro-3-deoxy-D-arabino-heptonate = 3-dehydroquinate + phosphate. It participates in metabolic intermediate biosynthesis; chorismate biosynthesis; chorismate from D-erythrose 4-phosphate and phosphoenolpyruvate: step 2/7. Catalyzes the conversion of 3-deoxy-D-arabino-heptulosonate 7-phosphate (DAHP) to dehydroquinate (DHQ). The sequence is that of 3-dehydroquinate synthase from Buchnera aphidicola subsp. Acyrthosiphon pisum (strain APS) (Acyrthosiphon pisum symbiotic bacterium).